The chain runs to 225 residues: Endonuclease V (225 aa).

D43 and D110 together coordinate Mg(2+).

This sequence belongs to the endonuclease V family. It depends on Mg(2+) as a cofactor.

It is found in the cytoplasm. The catalysed reaction is Endonucleolytic cleavage at apurinic or apyrimidinic sites to products with a 5'-phosphate.. Its function is as follows. DNA repair enzyme involved in the repair of deaminated bases. Selectively cleaves double-stranded DNA at the second phosphodiester bond 3' to a deoxyinosine leaving behind the intact lesion on the nicked DNA. This Thermotoga petrophila (strain ATCC BAA-488 / DSM 13995 / JCM 10881 / RKU-1) protein is Endonuclease V.